A 127-amino-acid polypeptide reads, in one-letter code: PRA1 family protein C (127 aa).

A run of 3 helical transmembrane segments spans residues 15-35 (IFIS…LIVA), 53-73 (VIDD…IFLL), and 76-96 (VSRG…VHGM).

The protein belongs to the PRA1 family.

It is found in the endoplasmic reticulum membrane. In terms of biological role, may be involved in both secretory and endocytic intracellular trafficking in the endosomal/prevacuolar compartments. This Arabidopsis thaliana (Mouse-ear cress) protein is PRA1 family protein C (PRA1C).